Here is a 33-residue protein sequence, read N- to C-terminus: Brevinin-2DYb (33 aa).

C27 and C33 are oxidised to a cystine.

Expressed by the skin glands.

It localises to the secreted. Functionally, antimicrobial peptide. Active against the Gram-positive bacterium S.aureus (MIC=30 uM) and the Gram-negative bacterium E.coli (MIC=30 uM). The protein is Brevinin-2DYb of Rana dybowskii (Dybovsky's frog).